The following is a 381-amino-acid chain: Protein-glutamate methylesterase/protein-glutamine glutaminase (381 aa).

In terms of domain architecture, Response regulatory spans 8-125 (QVLCIDDSAL…RDGMNEYADQ (118 aa)). Position 59 is a 4-aspartylphosphate (Asp-59). The region spanning 183-375 (FSSTEKLIIV…PHVLARLSAH (193 aa)) is the CheB-type methylesterase domain. Residues Ser-195, His-221, and Asp-317 contribute to the active site.

The protein belongs to the CheB family. Post-translationally, phosphorylated by CheA. Phosphorylation of the N-terminal regulatory domain activates the methylesterase activity.

Its subcellular location is the cytoplasm. It catalyses the reaction [protein]-L-glutamate 5-O-methyl ester + H2O = L-glutamyl-[protein] + methanol + H(+). It carries out the reaction L-glutaminyl-[protein] + H2O = L-glutamyl-[protein] + NH4(+). Involved in chemotaxis. Part of a chemotaxis signal transduction system that modulates chemotaxis in response to various stimuli. Catalyzes the demethylation of specific methylglutamate residues introduced into the chemoreceptors (methyl-accepting chemotaxis proteins or MCP) by CheR. Also mediates the irreversible deamidation of specific glutamine residues to glutamic acid. This is Protein-glutamate methylesterase/protein-glutamine glutaminase from Ralstonia nicotianae (strain ATCC BAA-1114 / GMI1000) (Ralstonia solanacearum).